The chain runs to 337 residues: MVREDVVGSTRTLQWKCVESRVDSKRLYYGRFVLSPLMKGQADTIGIAIRRALLGEIEGTCITRATSENVLHEYSTIAGIEESVHEILLNLKDIVLRSNLYGVRNASICVRGPKYITAQDIISPPSVEIVDTTQHIANLTEPINLCIELQIKRDRGYRMKSTNDSHDGSYPIDIVSMPVRNANHSIHSYGNGNEKQEILFIEIWTNGSLTPKEALYEASRNLIDLLIPFLHAEEEDMNFKENENRWNLPPFSFQDKFTNFKKNKKGIPLTCIFIDQSELSSRTYNCLKRSNIHTLLDLLSHSQEDLMKMEYFRTEDVKQILSTVQKHFAINLLNKKL.

Positions 1-233 (MVREDVVGST…DLLIPFLHAE (233 aa)) are alpha N-terminal domain (alpha-NTD). The segment at 265–337 (KGIPLTCIFI…FAINLLNKKL (73 aa)) is alpha C-terminal domain (alpha-CTD).

Belongs to the RNA polymerase alpha chain family. In plastids the minimal PEP RNA polymerase catalytic core is composed of four subunits: alpha, beta, beta', and beta''. When a (nuclear-encoded) sigma factor is associated with the core the holoenzyme is formed, which can initiate transcription.

It is found in the plastid. The protein localises to the chloroplast. The catalysed reaction is RNA(n) + a ribonucleoside 5'-triphosphate = RNA(n+1) + diphosphate. Its function is as follows. DNA-dependent RNA polymerase catalyzes the transcription of DNA into RNA using the four ribonucleoside triphosphates as substrates. The sequence is that of DNA-directed RNA polymerase subunit alpha from Phalaenopsis aphrodite subsp. formosana (Moth orchid).